Consider the following 778-residue polypeptide: MTTTTHILGYPRIGEKRELKFAQEKYWRGEIDQAELKKVGAELRHKNWQTQASAGLSFAVAGDFAWYDHVLTTTLLLGHVPKRHRHGFPDLDTLFRVGRGQSQSSCACHGAAASDMTKWFNTNYHYIVPEFSKEDTFEVSWPQLFEEVNEAVQAGHNVKPVLLGPLSYLYLGKEIEDGFDRLTLLPRLLTAYQAILAKLAKQGVEWVQIDEPILALELEKPWLDAFKLAYQVIRSDVKVLLTTYFDSVVDSLDRIVELSVDGLHVDLSAAPEQLDAVLAKLPQNWVLSLGVVNGRNVWRSDVKAQLERLQPVKAALGERLWVASSCSLLHSPVDLELEAGLSAEVRSWFAFAKQKVSEVVLLGKALDGDAAAIAQCEAYSQPIQARKSAAHVHKATVQSRVNAITAELAQRSVPYAERARHQAEVLQLPLLPTTTIGSFPQTSEIRVQRSAYRSGQLSSAEYEQALKGHIADAVKRQEALDLDVLVHGEAERNDMVEYFAENLAGFQTTQFGWVQSYGSRCVKPAIVVADIEREQPITVGWSTYAQSLTSKQMKGMLTGPVTILCWTFPREDISRKAIAQQLALALRDEVSDLQDAGINIIQIDEPAIREGLPLKKRDHQNYLDWAVEAFRISAASARPETQIHTHMCYSEFNEIIESVAALDADVITIETSRSNMELLKAFEEFNYPNEIGPGVYDIHSPNIPSEEWIVDLVKKAAQKIPVERLWVNPDCGLKTRNWPETEAALANLVSAAKRLRKEFAKETTAVNSEAVADVETEA.

5-methyltetrahydropteroyltri-L-glutamate-binding positions include 17 to 20 (RELK) and Lys-118. L-homocysteine-binding positions include 436–438 (IGS) and Glu-489. Residues 436-438 (IGS) and Glu-489 contribute to the L-methionine site. Residues 520–521 (RC) and Trp-566 contribute to the 5-methyltetrahydropteroyltri-L-glutamate site. Position 604 (Asp-604) interacts with L-homocysteine. An L-methionine-binding site is contributed by Asp-604. Residue Glu-610 coordinates 5-methyltetrahydropteroyltri-L-glutamate. Residues His-646, Cys-648, and Glu-670 each contribute to the Zn(2+) site. Residue His-699 is the Proton donor of the active site. A Zn(2+)-binding site is contributed by Cys-731.

It belongs to the vitamin-B12 independent methionine synthase family. Requires Zn(2+) as cofactor.

The catalysed reaction is 5-methyltetrahydropteroyltri-L-glutamate + L-homocysteine = tetrahydropteroyltri-L-glutamate + L-methionine. Its pathway is amino-acid biosynthesis; L-methionine biosynthesis via de novo pathway; L-methionine from L-homocysteine (MetE route): step 1/1. Its function is as follows. Catalyzes the transfer of a methyl group from 5-methyltetrahydrofolate to homocysteine resulting in methionine formation. This chain is 5-methyltetrahydropteroyltriglutamate--homocysteine methyltransferase, found in Vibrio vulnificus (strain CMCP6).